Reading from the N-terminus, the 433-residue chain is Pectinesterase B (433 aa).

The N-terminal stretch at 1–21 is a signal peptide; that stretch reads MSLTHYSGLAAAVSMSLILTA. C22 carries N-palmitoyl cysteine lipidation. A lipid anchor (S-diacylglycerol cysteine) is attached at C22. Residues 22–433 are Periplasmic-facing; the sequence is CGGQTPNSAR…EYNTQVLLHE (412 aa). T202 and Q236 together coordinate substrate. The Proton donor role is filled by D259. D292 functions as the Nucleophile in the catalytic mechanism. R356 and W358 together coordinate substrate.

It belongs to the pectinesterase family.

The protein resides in the cell outer membrane. The catalysed reaction is [(1-&gt;4)-alpha-D-galacturonosyl methyl ester](n) + n H2O = [(1-&gt;4)-alpha-D-galacturonosyl](n) + n methanol + n H(+). Its pathway is glycan metabolism; pectin degradation; 2-dehydro-3-deoxy-D-gluconate from pectin: step 1/5. Probably involved in the degradation of methylated oligogalacturonides present in the periplasm. More active on methylated oligogalacturides than on pectin. In Dickeya dadantii (strain 3937) (Erwinia chrysanthemi (strain 3937)), this protein is Pectinesterase B.